The chain runs to 952 residues: Respiratory burst oxidase homolog protein E (952 aa).

The Cytoplasmic portion of the chain corresponds to 1 to 392; the sequence is MKLSPLSFST…QCLILDNWQR (392 aa). EF-hand-like stretches follow at residues 211-219 and 245-256; these read SKNGLLARD and RRQKLEKITKDE. 2 EF-hand domains span residues 268-303 and 312-347; these read SFDA…SASA and QAEE…RDAY. The Ca(2+) site is built by Asp281, Asn283, Asp285, Lys287, and Glu292. Residues 393–413 traverse the membrane as a helical segment; the sequence is SWVLLVWVMLMAILFVWKFLE. Residues 414 to 475 are Extracellular-facing; that stretch reads YREKAAFKVM…PFDDNINFHK (62 aa). Positions 431-587 constitute a Ferric oxidoreductase domain; sequence KGAAETLKLN…LLVVVYIMLI (157 aa). Residues 476–496 form a helical membrane-spanning segment; sequence IIACAIAIGILVHAGTHLACD. Residues 497-531 lie on the Cytoplasmic side of the membrane; that stretch reads FPRIINSSPEQFVLIASAFNGTKPTFKDLMTGAEG. Residues 532-552 traverse the membrane as a helical segment; sequence ITGISMVILTTIAFTLASTHF. Over 553-574 the chain is Extracellular; sequence RRNRVRLPAPLDRLTGFNAFWY. Residues 575–595 form a helical membrane-spanning segment; that stretch reads THHLLVVVYIMLIVHGTFLFF. The Cytoplasmic portion of the chain corresponds to 596-603; the sequence is ADKWYQKT. A helical transmembrane segment spans residues 604 to 621; it reads TWMYISVPLVLYVAERSL. Residues 622 to 750 lie on the Extracellular side of the membrane; sequence RACRSKHYSV…PYGAPAQDYR (129 aa). The region spanning 626 to 748 is the FAD-binding FR-type domain; it reads SKHYSVKILK…DGPYGAPAQD (123 aa). The chain crosses the membrane as a helical span at residues 751–771; that stretch reads SYDVLLLIGLGIGATPFISIL. At 772 to 952 the chain is on the cytoplasmic side; the sequence is KDLLNNSRDE…TRFEFHKEHF (181 aa).

This sequence belongs to the RBOH (TC 5.B.1.3) family. In terms of assembly, monomer and homodimer. In terms of tissue distribution, expressed in roots, inflorescences, leaves and stems.

The protein resides in the membrane. Its function is as follows. Calcium-dependent NADPH oxidase that generates superoxide. The chain is Respiratory burst oxidase homolog protein E (RBOHE) from Arabidopsis thaliana (Mouse-ear cress).